The following is a 512-amino-acid chain: MESVIFSINGEIIQVNKEIITASPYNFFKRIQDHHLKDEAIILNGINYHAFESLLDYMRWKKINITINNVEMILVAAIIIDVPPVVDLCVKTMIHNINSTNCIRMFNFSKRYGIKKLYNASMSEIINNITAVTSDPEFGKLSKDELTTILSHEDVNVNHEDVTAMILLKWIHKNPNDVDIINILHPKFITNTMRNAISLLGLTISKSTKPVTRNGIKHNIVVIKNSDYISTITHYSPRTEYWTIVGNTDRQFYNANVLHNCLYIIGGMINNRHVYSVSRVDLETKKWKTVTNMSSLKSEVSTCVNNGKLYVIGGLEFSISTGVAEYLKHGTSKWIRLPNLITPRYSGASVFVNDDIYVMGGVYTTYEKYVVLNDVECFTKNRWIKKSPMPRHHSIVYAVEYDGDIYVITGITHETRNYLYKYIVKEDKWIELYMYFNHVGKMFVCSCGDYILIIADAKYEYYPKSNTWNLFDMSTRNIEYYDMFTKDETPKCNVTHKSLPSFLSNCEKQFLQ.

A BTB domain is found at 2 to 67; sequence ESVIFSINGE…MRWKKINITI (66 aa). The region spanning 102-176 is the BACK domain; it reads CIRMFNFSKR…LLKWIHKNPN (75 aa). Kelch repeat units lie at residues 216 to 261, 262 to 307, 309 to 354, 356 to 403, 405 to 449, and 452 to 498; these read IKHN…LHNC, LYII…VNNG, LYVI…FVND, IYVM…EYDG, IYVI…SCGD, and LIIA…THKS.

It belongs to the poxviruses Kelch family.

The polypeptide is Kelch repeat protein C2 (Rabbitpox virus (strain Utrecht) (RPV)).